The sequence spans 462 residues: MSTGTVVQVIGAVVDVEFPQHAVPQVYDALKITGEGTCNGLVLEVQQQLGGGVVRTIAMGSSDGLRRGIEVENTGSAIAVPVGKATLGRIMNVLGEPVDEAGPIGEEDRYVIHRAAPSYEEQSNTTELLETGIKVIDLVCPFAKGGKVGLFGGAGVGKTVNMMELINNIAKAHSGLSVFAGVGERTREGNDFYYEMMESGVLDKVAMVYGQMNEPPGNRLRVALTGLTMAEKFRDEGKDVLLFVDNIYRYTLAGTEVSALLGRMPSAVGYQPTLAEEMGVLQERITSTKTGSITSVQAVYVPADDLTDPSPATTFAHLDATVVLSRQIASLGIYPAVDPLDSTSRQLDPLVVGQEHYDVANGVQNVLQRYKELKDIIAILGMDELSDDDKMTVSRARKIERFLSQPFHVAEVFTGSPGKYVPLKDTIRGFKGILEGEFDHVPEQAFYMVGSVDEAVEKANKK.

152–159 (GGAGVGKT) lines the ATP pocket.

This sequence belongs to the ATPase alpha/beta chains family. As to quaternary structure, F-type ATPases have 2 components, CF(1) - the catalytic core - and CF(0) - the membrane proton channel. CF(1) has five subunits: alpha(3), beta(3), gamma(1), delta(1), epsilon(1). CF(0) has three main subunits: a(1), b(2) and c(9-12). The alpha and beta chains form an alternating ring which encloses part of the gamma chain. CF(1) is attached to CF(0) by a central stalk formed by the gamma and epsilon chains, while a peripheral stalk is formed by the delta and b chains.

It is found in the cell inner membrane. The enzyme catalyses ATP + H2O + 4 H(+)(in) = ADP + phosphate + 5 H(+)(out). Its function is as follows. Produces ATP from ADP in the presence of a proton gradient across the membrane. The catalytic sites are hosted primarily by the beta subunits. The polypeptide is ATP synthase subunit beta (Shewanella amazonensis (strain ATCC BAA-1098 / SB2B)).